Reading from the N-terminus, the 131-residue chain is Large ribosomal subunit protein bL12 (131 aa).

This sequence belongs to the bacterial ribosomal protein bL12 family. In terms of assembly, homodimer. Part of the ribosomal stalk of the 50S ribosomal subunit. Forms a multimeric L10(L12)X complex, where L10 forms an elongated spine to which 2 to 4 L12 dimers bind in a sequential fashion. Binds GTP-bound translation factors.

Forms part of the ribosomal stalk which helps the ribosome interact with GTP-bound translation factors. Is thus essential for accurate translation. This is Large ribosomal subunit protein bL12 from Prochlorococcus marinus subsp. pastoris (strain CCMP1986 / NIES-2087 / MED4).